A 554-amino-acid chain; its full sequence is Sesquiterpene synthase 14a (554 aa).

Mg(2+)-binding residues include aspartate 305, aspartate 309, aspartate 449, and glutamate 457. A DDXXD motif motif is present at residues 305–309 (DDLYD).

Belongs to the terpene synthase family. Tpsa subfamily. Requires Mg(2+) as cofactor. The cofactor is Mn(2+). In terms of tissue distribution, mostly expressed in stem trichomes.

The enzyme catalyses (2E,6E)-farnesyl diphosphate = beta-bisabolene + diphosphate. It catalyses the reaction (2E,6E)-farnesyl diphosphate = (Z)-alpha-bisabolene + diphosphate. The catalysed reaction is (2E,6E)-farnesyl diphosphate = beta-acoradiene + diphosphate. It carries out the reaction (2E,6E)-farnesyl diphosphate = (E)-gamma-bisabolene + diphosphate. The enzyme catalyses (2E,6E)-farnesyl diphosphate = (E)-beta-farnesene + diphosphate. It catalyses the reaction (2E,6E)-farnesyl diphosphate = (Z)-beta-farnesene + diphosphate. The catalysed reaction is (2E)-geranyl diphosphate = limonene + diphosphate. It carries out the reaction (2E)-geranyl diphosphate = beta-myrcene + diphosphate. The protein operates within secondary metabolite biosynthesis; terpenoid biosynthesis. In terms of biological role, sesquiterpene synthase involved in the biosynthesis of volatile compounds. Mediates the conversion of (2E,6E)-farnesyl diphosphate ((EE)-FPP) into beta-bisabolene, beta-farnesene, (E)-gamma-bisabolene, beta-acoradiene, selinene and (Z)-alpha-bisabolene. Low or no activity with (2Z,6Z)-farnesyl diphosphate ((ZZ)-FPP). Can act with a low efficiency as a monoterpene synthase with geranyl diphosphate (GPP) as substrate, thus producing beta-myrcene and limonene. The polypeptide is Sesquiterpene synthase 14a (Solanum habrochaites (Wild tomato)).